Consider the following 434-residue polypeptide: UDP-N-acetylglucosamine 1-carboxyvinyltransferase 1 (434 aa).

22–23 (KN) is a phosphoenolpyruvate binding site. UDP-N-acetyl-alpha-D-glucosamine is bound at residue arginine 93. The active-site Proton donor is cysteine 117. The residue at position 117 (cysteine 117) is a 2-(S-cysteinyl)pyruvic acid O-phosphothioketal. UDP-N-acetyl-alpha-D-glucosamine-binding positions include 122 to 126 (RPIDQ), aspartate 306, and valine 328.

This sequence belongs to the EPSP synthase family. MurA subfamily.

The protein resides in the cytoplasm. It catalyses the reaction phosphoenolpyruvate + UDP-N-acetyl-alpha-D-glucosamine = UDP-N-acetyl-3-O-(1-carboxyvinyl)-alpha-D-glucosamine + phosphate. It participates in cell wall biogenesis; peptidoglycan biosynthesis. Its function is as follows. Cell wall formation. Adds enolpyruvyl to UDP-N-acetylglucosamine. This chain is UDP-N-acetylglucosamine 1-carboxyvinyltransferase 1, found in Bacillus cereus (strain ATCC 10987 / NRS 248).